The chain runs to 622 residues: Chaperone protein HscA homolog (622 aa).

It belongs to the heat shock protein 70 family.

Chaperone involved in the maturation of iron-sulfur cluster-containing proteins. Has a low intrinsic ATPase activity which is markedly stimulated by HscB. This chain is Chaperone protein HscA homolog, found in Acidovorax ebreus (strain TPSY) (Diaphorobacter sp. (strain TPSY)).